The primary structure comprises 139 residues: D-ribose pyranase (139 aa).

Catalysis depends on His-20, which acts as the Proton donor. Substrate-binding positions include Asp-28, His-106, and 128 to 130 (YAN).

Belongs to the RbsD / FucU family. RbsD subfamily. In terms of assembly, homodecamer.

Its subcellular location is the cytoplasm. It catalyses the reaction beta-D-ribopyranose = beta-D-ribofuranose. Its pathway is carbohydrate metabolism; D-ribose degradation; D-ribose 5-phosphate from beta-D-ribopyranose: step 1/2. Functionally, catalyzes the interconversion of beta-pyran and beta-furan forms of D-ribose. This is D-ribose pyranase from Aliivibrio fischeri (strain MJ11) (Vibrio fischeri).